The sequence spans 98 residues: Protein E7 (98 aa).

Positions 1-40 (MRGETPTLQDYVLDLQPEATDLHCYEQLPDSSDEEDVIDS) are E7 terminal domain. The LXCXE motif; interaction with host RB1 and TMEM173/STING signature appears at 22–26 (LHCYE). The segment at 58–94 (CCQCKSTLRLCVQSTQVDIRILQELLMGSFGIVCPNC) is a zinc-finger region. A Nuclear export signal motif is present at residues 76-84 (IRILQELLM).

It belongs to the papillomaviridae E7 protein family. In terms of assembly, homodimer. Homooligomer. Interacts with host RB1; this interaction induces dissociation of RB1-E2F1 complex thereby disrupting RB1 activity. Interacts with host EP300; this interaction represses EP300 transcriptional activity. Interacts with protein E2; this interaction inhibits E7 oncogenic activity. Interacts with host TMEM173/STING; this interaction impairs the ability of TMEM173/STING to sense cytosolic DNA and promote the production of type I interferon (IFN-alpha and IFN-beta). Post-translationally, highly phosphorylated.

It is found in the host cytoplasm. It localises to the host nucleus. Functionally, E7 protein has both transforming and trans-activating activities. Disrupts the function of host retinoblastoma protein RB1/pRb, which is a key regulator of the cell cycle. Induces the disassembly of the E2F1 transcription factors from RB1, with subsequent transcriptional activation of E2F1-regulated S-phase genes. Inactivation of the ability of RB1 to arrest the cell cycle is critical for cellular transformation, uncontrolled cellular growth and proliferation induced by viral infection. Stimulation of progression from G1 to S phase allows the virus to efficiently use the cellular DNA replicating machinery to achieve viral genome replication. Interferes with histone deacetylation mediated by HDAC1 and HDAC2, leading to activation of transcription. In terms of biological role, plays a role in viral genome replication by driving entry of quiescent cells into the cell cycle. Stimulation of progression from G1 to S phase allows the virus to efficiently use the cellular DNA replicating machinery to achieve viral genome replication. E7 protein has both transforming and trans-activating activities. Induces the disassembly of the E2F1 transcription factor from RB1, with subsequent transcriptional activation of E2F1-regulated S-phase genes. Interferes with host histone deacetylation mediated by HDAC1 and HDAC2, leading to transcription activation. Also plays a role in the inhibition of both antiviral and antiproliferative functions of host interferon alpha. Interaction with host TMEM173/STING impairs the ability of TMEM173/STING to sense cytosolic DNA and promote the production of type I interferon (IFN-alpha and IFN-beta). The sequence is that of Protein E7 from Homo sapiens (Human).